Reading from the N-terminus, the 219-residue chain is 2-hydroxy-3-keto-5-methylthiopentenyl-1-phosphate phosphatase (219 aa).

This sequence belongs to the HAD-like hydrolase superfamily. MtnX family.

It catalyses the reaction 2-hydroxy-5-methylsulfanyl-3-oxopent-1-enyl phosphate + H2O = 1,2-dihydroxy-5-(methylsulfanyl)pent-1-en-3-one + phosphate. Its pathway is amino-acid biosynthesis; L-methionine biosynthesis via salvage pathway; L-methionine from S-methyl-5-thio-alpha-D-ribose 1-phosphate: step 4/6. Functionally, dephosphorylates 2-hydroxy-3-keto-5-methylthiopentenyl-1-phosphate (HK-MTPenyl-1-P) yielding 1,2-dihydroxy-3-keto-5-methylthiopentene (DHK-MTPene). This chain is 2-hydroxy-3-keto-5-methylthiopentenyl-1-phosphate phosphatase, found in Bacillus cereus (strain 03BB102).